The chain runs to 688 residues: Two-component response regulator ORR23 (688 aa).

Positions 25-140 (RVLAVDDDPV…ELRNIWQHVI (116 aa)) constitute a Response regulatory domain. Position 76 is a 4-aspartylphosphate (Asp76). A disordered region spans residues 161–212 (PPNADSDHVHGHVTCGSPDQSGRPSKKRKEYCSEEEDEGEVNTQDIDDPSAP). Acidic residues predominate over residues 193–208 (SEEEDEGEVNTQDIDD). Residues 211-270 (APKKPRVVWSVELHRKFVAAVNQLGIDKAVPKRILELMNVEKLTRENVASHLQKYRLYLK) constitute a DNA-binding region (myb-like GARP).

The protein belongs to the ARR family. Type-B subfamily. In terms of processing, two-component system major event consists of a His-to-Asp phosphorelay between a sensor histidine kinase (HK) and a response regulator (RR). In plants, the His-to-Asp phosphorelay involves an additional intermediate named Histidine-containing phosphotransfer protein (HPt). This multistep phosphorelay consists of a His-Asp-His-Asp sequential transfer of a phosphate group between first a His and an Asp of the HK protein, followed by the transfer to a conserved His of the HPt protein and finally the transfer to an Asp in the receiver domain of the RR protein.

It is found in the nucleus. Its function is as follows. Transcriptional activator that binds specific DNA sequence. Functions as a response regulator involved in His-to-Asp phosphorelay signal transduction system. Phosphorylation of the Asp residue in the receiver domain activates the ability of the protein to promote the transcription of target genes. May directly activate some type-A response regulators in response to cytokinins. The polypeptide is Two-component response regulator ORR23 (Oryza sativa subsp. japonica (Rice)).